The following is a 262-amino-acid chain: Alpha-tubulin N-acetyltransferase 1 (262 aa).

The region spanning Met1–Phe177 is the N-acetyltransferase domain. Residue Phe111–Gln124 participates in acetyl-CoA binding.

This sequence belongs to the acetyltransferase ATAT1 family. In terms of tissue distribution, expressed solely in touch receptor neurons.

The enzyme catalyses L-lysyl-[alpha-tubulin] + acetyl-CoA = N(6)-acetyl-L-lysyl-[alpha-tubulin] + CoA + H(+). In terms of biological role, specifically acetylates 'Lys-40' in alpha-tubulin/mec-12 on the lumenal side of microtubules. Promotes microtubule destabilization and accelerates microtubule dynamics; this activity may be independent of acetylation activity. Acetylates alpha-tubulin with a slow enzymatic rate, due to a catalytic site that is not optimized for acetyl transfer. Enters the microtubule through each end and diffuses quickly throughout the lumen of microtubules. Acetylates only long/old microtubules because of its slow acetylation rate since it does not have time to act on dynamically unstable microtubules before the enzyme is released. Required for the maintenance of touch receptor neurons and possibly other type of neurons involved in locomotion. Regulates the number and localization of mitochondria in mechanosensory neurons. Plays a role in axonal transport. This is Alpha-tubulin N-acetyltransferase 1 from Caenorhabditis elegans.